A 262-amino-acid chain; its full sequence is 2-oxo-tetronate isomerase (262 aa).

Glu-143 acts as the Proton donor/acceptor in catalysis. Mg(2+)-binding residues include Glu-143, Asp-178, Gln-204, and Glu-240. Catalysis depends on Glu-240, which acts as the Proton donor/acceptor.

Belongs to the hyi family. OtnI subfamily.

The catalysed reaction is 2-dehydro-L-erythronate = 3-dehydro-L-erythronate. The enzyme catalyses 2-dehydro-D-erythronate = 3-dehydro-D-erythronate. Catalyzes the isomerization of 2-oxo-tetronate to 3-oxo-tetronate. In Pectobacterium atrosepticum (strain SCRI 1043 / ATCC BAA-672) (Erwinia carotovora subsp. atroseptica), this protein is 2-oxo-tetronate isomerase.